We begin with the raw amino-acid sequence, 123 residues long: Sterol carrier protein 2 (123 aa).

The SCP2 domain occupies 16-113; the sequence is KEHLSTDAGK…GSLSAAQKFT (98 aa). Residues 121 to 123 carry the Microbody targeting signal motif; the sequence is SKL.

As to expression, expressed in most tissues including seedlings, cotyledons, inflorescence, leaves, stems, roots, siliques and flower buds, with the highest levels in floral tissues and in maturing seeds.

The protein resides in the peroxisome. In terms of biological role, enhances the transfer of lipids between membranes in vitro. Active on phosphatidylcholine (PC), 1-palmitoyl 2-oleoyl phosphatidylcholine (POPC) and ergosterol, and, to a lower extent, dimyristoyl phosphatidic acid, stigmasterol, desmosterol, beta-sitosterol and steryl glucoside. Inactive or poorly active on palmitic acid, stearoyl-coenzyme A, cholesterol, glucosylceramide and ceramide. Required during seeds and seedlings development. The polypeptide is Sterol carrier protein 2 (Arabidopsis thaliana (Mouse-ear cress)).